A 508-amino-acid polypeptide reads, in one-letter code: POTE ankyrin domain family member G (508 aa).

ANK repeat units follow at residues 172 to 201, 205 to 234, 238 to 267, 271 to 300, and 304 to 333; these read QKRT…QLNI, KKRT…DPNI, YGNT…DIES, HGLT…NLNA, and YGRT…DVSS. Residues 367 to 376 are compositionally biased toward polar residues; the sequence is KVSSENSNPE. Residues 367–488 form a disordered region; it reads KVSSENSNPE…QLSEEQNTGI (122 aa). 2 stretches are compositionally biased toward basic and acidic residues: residues 377 to 392 and 406 to 421; these read QDLK…RLKG and EINK…EMKK. A compositionally biased stretch (polar residues) spans 476 to 488; that stretch reads TQKQLSEEQNTGI.

Belongs to the POTE family.

This chain is POTE ankyrin domain family member G (POTEG), found in Homo sapiens (Human).